The chain runs to 386 residues: S-adenosylmethionine:tRNA ribosyltransferase-isomerase (386 aa).

Belongs to the QueA family. Monomer.

It localises to the cytoplasm. It catalyses the reaction 7-aminomethyl-7-carbaguanosine(34) in tRNA + S-adenosyl-L-methionine = epoxyqueuosine(34) in tRNA + adenine + L-methionine + 2 H(+). The protein operates within tRNA modification; tRNA-queuosine biosynthesis. Transfers and isomerizes the ribose moiety from AdoMet to the 7-aminomethyl group of 7-deazaguanine (preQ1-tRNA) to give epoxyqueuosine (oQ-tRNA). This Rickettsia canadensis (strain McKiel) protein is S-adenosylmethionine:tRNA ribosyltransferase-isomerase.